The chain runs to 259 residues: Global transcriptional regulator CodY (259 aa).

A GAF domain region spans residues 1 to 155 (MTLLEKTRKI…GGTVVGMEIL (155 aa)). The H-T-H motif DNA-binding region spans 203–222 (ASKIADRVGITRSVIVNALR).

The protein belongs to the CodY family.

The protein resides in the cytoplasm. Functionally, DNA-binding global transcriptional regulator which is involved in the adaptive response to starvation and acts by directly or indirectly controlling the expression of numerous genes in response to nutrient availability. During rapid exponential growth, CodY is highly active and represses genes whose products allow adaptation to nutrient depletion. The polypeptide is Global transcriptional regulator CodY (Listeria welshimeri serovar 6b (strain ATCC 35897 / DSM 20650 / CCUG 15529 / CIP 8149 / NCTC 11857 / SLCC 5334 / V8)).